The primary structure comprises 546 residues: Chaperonin GroEL (546 aa).

ATP-binding positions include 29-32 (TLGP), Lys-50, 86-90 (DGTTT), Gly-415, and Asp-495. Residues 526-546 (EDNAGGGGMPQGMGGGMPGMM) form a disordered region. Positions 529–546 (AGGGGMPQGMGGGMPGMM) are enriched in gly residues.

The protein belongs to the chaperonin (HSP60) family. Forms a cylinder of 14 subunits composed of two heptameric rings stacked back-to-back. Interacts with the co-chaperonin GroES.

The protein resides in the cytoplasm. It carries out the reaction ATP + H2O + a folded polypeptide = ADP + phosphate + an unfolded polypeptide.. Its function is as follows. Together with its co-chaperonin GroES, plays an essential role in assisting protein folding. The GroEL-GroES system forms a nano-cage that allows encapsulation of the non-native substrate proteins and provides a physical environment optimized to promote and accelerate protein folding. The protein is Chaperonin GroEL of Christiangramia forsetii (strain DSM 17595 / CGMCC 1.15422 / KT0803) (Gramella forsetii).